A 545-amino-acid chain; its full sequence is Chaperonin GroEL (545 aa).

Residues 30 to 33 (TLGP), lysine 51, 87 to 91 (DGTTT), glycine 415, and aspartate 495 each bind ATP.

This sequence belongs to the chaperonin (HSP60) family. Forms a cylinder of 14 subunits composed of two heptameric rings stacked back-to-back. Interacts with the co-chaperonin GroES.

It localises to the cytoplasm. It carries out the reaction ATP + H2O + a folded polypeptide = ADP + phosphate + an unfolded polypeptide.. In terms of biological role, together with its co-chaperonin GroES, plays an essential role in assisting protein folding. The GroEL-GroES system forms a nano-cage that allows encapsulation of the non-native substrate proteins and provides a physical environment optimized to promote and accelerate protein folding. The chain is Chaperonin GroEL from Shewanella amazonensis (strain ATCC BAA-1098 / SB2B).